The following is a 922-amino-acid chain: Protein translocase subunit SecA (922 aa).

ATP-binding positions include glutamine 87, 105-109 (GEGKT), and aspartate 516. A disordered region spans residues 867–912 (YTAPTETGEPETLPDPRTAGAGGDGLNLPEGVRIGRNDPCPCGSGK). Cysteine 906, cysteine 908, cysteine 917, and histidine 918 together coordinate Zn(2+).

It belongs to the SecA family. Monomer and homodimer. Part of the essential Sec protein translocation apparatus which comprises SecA, SecYEG and auxiliary proteins SecDF-YajC and YidC. Requires Zn(2+) as cofactor.

The protein resides in the cell inner membrane. The protein localises to the cytoplasm. The catalysed reaction is ATP + H2O + cellular proteinSide 1 = ADP + phosphate + cellular proteinSide 2.. Part of the Sec protein translocase complex. Interacts with the SecYEG preprotein conducting channel. Has a central role in coupling the hydrolysis of ATP to the transfer of proteins into and across the cell membrane, serving both as a receptor for the preprotein-SecB complex and as an ATP-driven molecular motor driving the stepwise translocation of polypeptide chains across the membrane. The sequence is that of Protein translocase subunit SecA from Paracidovorax citrulli (strain AAC00-1) (Acidovorax citrulli).